The chain runs to 144 residues: Aspartate carbamoyltransferase regulatory chain (144 aa).

Zn(2+)-binding residues include C103, C108, C132, and C135.

Belongs to the PyrI family. Contains catalytic and regulatory chains. Zn(2+) is required as a cofactor.

Involved in allosteric regulation of aspartate carbamoyltransferase. The chain is Aspartate carbamoyltransferase regulatory chain from Clostridium tetani (strain Massachusetts / E88).